The sequence spans 323 residues: MHRTTRIKITELNPHLMCVLCGGYFIDAATIIECLHSFCKTCIVRYLETSKYCPICDVQVHKTRPLLNIRADKTLQDIVYKLVPGLFKGEMKRRRDFYAAHPSVDAANGSNEDRGEVADEDKRIITDDEIISLSIEFFDQNRANRKGSKDKEKSKDEANDKRYLRCPAALTIMHLRKFLRSKMDIPSNFQIDVMYEEEPLKDYYTLMDIAYIYTWRRNGPLPLKYRVRPTCKRVKINPHTDRINNTSGDMESDSGSDKAGSLGGGIPSTSSCMPRPPVQSPHPHFPHISSTINGTNSSSSHQNPFANRARKISLNGVSAISSG.

The RING-type zinc-finger motif lies at 18–57; that stretch reads CVLCGGYFIDAATIIECLHSFCKTCIVRYLETSKYCPICD. The Nuclear localization signal motif lies at 81–95; sequence KLVPGLFKGEMKRRR. The segment at 238–310 is disordered; that stretch reads PHTDRINNTS…HQNPFANRAR (73 aa). Over residues 287–301 the composition is skewed to low complexity; sequence HISSTINGTNSSSSH.

In terms of assembly, component of a PRC1-like complex. Interacts with cbx4.

The protein localises to the nucleus. Component of a Polycomb group (PcG) multiprotein PRC1-like complex, a complex class required to maintain the transcriptionally repressive state of many genes, including Hox genes, throughout development. PcG PRC1 complex acts via chromatin remodeling and modification of histones; it mediates monoubiquitination of histone H2A 'Lys-119', rendering chromatin heritably changed in its expressibility. In the PRC1 complex, it is required to stimulate the E3 ubiquitin-protein ligase activity of rnf2. The chain is Polycomb complex protein BMI-1-B (bmi1b) from Xenopus laevis (African clawed frog).